Reading from the N-terminus, the 1411-residue chain is MSGHDSVTKISHILNEPVNEKVMVQNGFHESSKIADIELEIQERPSIKQWESPRSAVIPTSNHNFSPFLYTQFKSRGAAPFAPETIKSVDLVELPEGVPARVFHEKTGLFYQISPHSIPTFILAKKELPDPIKFYELVEDLGSVYGCVKLKIIPDADKFTQLNVDVDRLWFKARKQFFNSNEFQRTKIVDFYAKLYNFHNKIKKSTLTRIPSIDKRTLDLYRLRSCVKLRGGFNAVCEKKLWAQIGRELGYSGRIMSSLSTSLRSAYAKILLDFDIYEEEEQAARNNEKNEDMVESEIFRHSNSRSRDEEEPLHKKAKIHRDVFRAGSINHEFKRMRDIKHIKGFPTYFNSLTEFKLGYTQSTETTLPGYDFTFWENGMEIYDKSKYETKTSPVYNLRQYYEKSLAVFTAIVAKFGSSYPDLFAKHTTLPQKEFERLYFHLLSEHFIDFEIDTGLGLPCSMRSPGNNSSNEKFAIKNILDQWNLDNIPLNELSLLQHLDLDMANFTRTTYDIGMLFSCQGWSVSDHFLPSIDFNHLGSTKLVYSIAPKDMEKFEALIARGKSEWDTIQSRPRYSTSDDELKSFIETDFYKSFLDAEQSADYSNTGDNSKNSFPEDKIAGNTLHDGSQSDFIFEPNFILANGIKLYKTTQEQGSYIFKFPKAFTCSIGSGFYLSQNAKFAPSSWLRFSSEAAKWTSKMGFLPGLDVNQLLINALLNSNNPVLRKKCRDLISNYVVEEAENSKKLGELIGTVDVVYNKLNYISDISLESTGLSKIVVTHGALQRNLSLKEFVVLLEKPENGAHSICGIPIRDQSGNLNVCLHSYFDSASLGIALDGLDKPPTSYLLVHNEDFEKKWDVLMTSTFRNRTVPLNIIQYLISHTDSNTEFNRMLRSNFDDSLLLIEKCKKFIKTFVDVSCSVKDVDFGNGFNLRHLPLKFSDNMADNLESLYESVRKCSIEFSEKPTIIRLYHVSRQFPIDNRDIIDGNNLDLLKELYQKSLTIPLKVSYWTKLTRKICRLEWLSVYEHIFIERCDIKNEDPAKYSLPLLYSYFEFGLKYCDSEDIDKLGEVRKLILKYQDMMQKVRVFLKKDPPSKISLSDLEDVLLDIEEYRLPIQSSFFSELDYVIREIENAKKMNDVNILYNTDNIDKIDELIRKNDPKFVKFANQFNGSRLDKRPLASDNSGSVKAKQELKVFKLWNQHLDQIMQKNKFIEILPSIFRCLDLKSDKYIPLESCSKRQTKYCFCRRVEEGTAMVECEICKEWYHVDCISNGELVPPDDPNVLFVCSICTPPCMAVDNIEGVTFELDDLKRILVESLKLSLIPDPPILKNLFDVFAFALNFKNEMEKELFTNGYVNQLSSTHKIKYYLRKLKGSQCGFTNLTDPLRKHCQVKDAEAIKWLTDNGRIIITGIPN.

In terms of domain architecture, JmjN spans 118-159 (IPTFILAKKELPDPIKFYELVEDLGSVYGCVKLKIIPDADKF). An ARID domain is found at 185-279 (RTKIVDFYAK…ILLDFDIYEE (95 aa)). The interval 285–312 (RNNEKNEDMVESEIFRHSNSRSRDEEEP) is disordered. A JmjC domain is found at 476–695 (KNILDQWNLD…FSSEAAKWTS (220 aa)). A PHD-type zinc finger spans residues 1238-1290 (TKYCFCRRVEEGTAMVECEICKEWYHVDCISNGELVPPDDPNVLFVCSICTPP).

The protein localises to the nucleus. Functionally, may be involved in cell wall organization and biogenesis. This chain is Protein ECM5 (ECM5), found in Saccharomyces cerevisiae (strain ATCC 204508 / S288c) (Baker's yeast).